Here is a 62-residue protein sequence, read N- to C-terminus: Large ribosomal subunit protein bL32 (62 aa).

Residues 28–62 (SIEPTTGEVHRRHHISPDGFYRGRQVIKAKEQDEE) are disordered.

Belongs to the bacterial ribosomal protein bL32 family.

The polypeptide is Large ribosomal subunit protein bL32 (Thioalkalivibrio sulfidiphilus (strain HL-EbGR7)).